The chain runs to 218 residues: MGQKINPLGFRLGTTQGHHSLWFSQPKNYSEGLQEDQKIRDCIKNYVQKNMRTSSGVEGIARIEIKKRIDLIQVIIFMGFPKLLIESRPRGIEELQTTLQKEFNCVNRKLNIAVTRIAKPYGNPNILAEFIAGQLKNRVSFRKAMKKAIELTEQADTKGIQIQIAGRIDGKEIARVEWIREGRVPLQTIRAKIDYCSYTVRTIYGVLGIKIWIFLDQE.

In terms of domain architecture, KH type-2 spans 47 to 118 (VQKNMRTSSG…KLNIAVTRIA (72 aa)).

It belongs to the universal ribosomal protein uS3 family. In terms of assembly, part of the 30S ribosomal subunit.

The protein resides in the plastid. It localises to the chloroplast. In Nicotiana tomentosiformis (Tobacco), this protein is Small ribosomal subunit protein uS3c (rps3).